We begin with the raw amino-acid sequence, 673 residues long: Metal-nicotianamine transporter YSL1 (673 aa).

Residues 1-13 (MEIEQRRIMKREG) show a composition bias toward basic and acidic residues. The segment at 1–39 (MEIEQRRIMKREGEEEEDNNQLSLQEEEPDTEEEMSGRT) is disordered. Residues 14–34 (EEEEDNNQLSLQEEEPDTEEE) are compositionally biased toward acidic residues. 16 consecutive transmembrane segments (helical) span residues 46–66 (QITVRGVFVSIVIGVVFSVIA), 71–91 (LTTGIVPNLNSSAALLAFVFV), 119–139 (SAVACYGIAVGGGFASYLLGL), 163–183 (GLGWMTAYLFVVCFIGLFVLI), 225–245 (FMKYFSFSFLWGFFQWFFSGI), 260–280 (AWKQTFFFDFSMTFVGAGMIC), 283–303 (LVNLSLLLGAILSYGLMWPLL), 328–348 (VFLSVALILGDGLYTFVKILF), 392–412 (FAVSGYLTFAAVSTVVVPLIF), 420–440 (VIVAYIFAPSLAFCNAYGAGL), 442–462 (DINMAYNYGKIGLFVIAAVTG), 467–487 (VVAGLAGCGLIKSVVSVSCIL), 510–530 (IGTVVGCIVTPLSFFLFYKAF), 558–578 (FSALPLHCLQMCYGFFGFAVL), 604–624 (FLVGAYFAIDMCVGTLIVFVW), and 642–662 (GLICGEGLWTLPAAVLALAGV).

This sequence belongs to the YSL (TC 2.A.67.2) family. In terms of tissue distribution, low levels of expression in leaves and shoots, but not detected in roots. Restricted to the vasculature, in the xylem parenchyma surrounding xylem tubes. Expressed in pollen grains, in the vasculature of petals and sepals, in the carpel veins, in the style underneath the stigmatic papillae, in the vascular tissue of the funiculus and in the chalazal endosperm.

The protein localises to the membrane. In terms of biological role, involved in iron loading of the seeds. Acts probably as a transporter of iron- and metal-nicotianamine chelates. This is Metal-nicotianamine transporter YSL1 (YSL1) from Arabidopsis thaliana (Mouse-ear cress).